Here is a 148-residue protein sequence, read N- to C-terminus: Large ribosomal subunit protein uL15 (148 aa).

Residues 1–30 (MPSKLRKTRKLRGHVSHGHGRIGKHRKHPG) show a composition bias toward basic residues. Positions 1-38 (MPSKLRKTRKLRGHVSHGHGRIGKHRKHPGGRGNAGGM) are disordered.

This sequence belongs to the universal ribosomal protein uL15 family. In terms of assembly, component of the large ribosomal subunit.

It localises to the cytoplasm. Functionally, component of the large ribosomal subunit. The ribosome is a large ribonucleoprotein complex responsible for the synthesis of proteins in the cell. This is Large ribosomal subunit protein uL15 (rpl27a) from Xenopus laevis (African clawed frog).